The chain runs to 333 residues: Terminal uridylyltransferase 4 (333 aa).

UTP-binding positions include serine 54 and 65–68 (SDVD). Mg(2+)-binding residues include aspartate 66 and aspartate 68. Residue arginine 121 participates in RNA binding. UTP contacts are provided by residues 144 to 148 (GVRNS), lysine 169, lysine 173, and 188 to 189 (SY). The PAP-associated domain occupies 237-302 (LGTQVLDFLH…WCIEDPYELN (66 aa)).

Belongs to the DNA polymerase type-B-like family. As to quaternary structure, monomer. Mg(2+) serves as cofactor. Requires Mn(2+) as cofactor.

The enzyme catalyses RNA(n) + UTP = RNA(n)-3'-uridine ribonucleotide + diphosphate. Its activity is regulated as follows. The 3' uridylated RNA substrate is involved in the selective incorporation of UTP; UTP binding is favored due to the constraint posed on the positioning of the NTP base by the continuous stacking interactions between Tyr-189 side chain, the bound NTP, and the terminal nucleoside base of the RNA substrate. In terms of biological role, terminal uridylyltransferase which, specifically, catalyzes the addition of Us to the 3'-hydroxyl group of single-stranded RNAs with a 3'-terminal U. The polypeptide is Terminal uridylyltransferase 4 (Trypanosoma brucei brucei (strain 927/4 GUTat10.1)).